A 462-amino-acid polypeptide reads, in one-letter code: tRNA(Ile)-lysidine synthase (462 aa).

Ser27–Ser32 lines the ATP pocket.

This sequence belongs to the tRNA(Ile)-lysidine synthase family.

Its subcellular location is the cytoplasm. It carries out the reaction cytidine(34) in tRNA(Ile2) + L-lysine + ATP = lysidine(34) in tRNA(Ile2) + AMP + diphosphate + H(+). Ligates lysine onto the cytidine present at position 34 of the AUA codon-specific tRNA(Ile) that contains the anticodon CAU, in an ATP-dependent manner. Cytidine is converted to lysidine, thus changing the amino acid specificity of the tRNA from methionine to isoleucine. The polypeptide is tRNA(Ile)-lysidine synthase (Clostridioides difficile (strain 630) (Peptoclostridium difficile)).